We begin with the raw amino-acid sequence, 450 residues long: Tubulin alpha-3E chain (450 aa).

Positions 1–4 (MREC) match the MREC motif motif. Residue glutamine 11 participates in GTP binding. The residue at position 40 (lysine 40) is an N6-acetyllysine. Residues glutamate 71, serine 140, glycine 144, threonine 145, threonine 179, asparagine 206, and asparagine 228 each contribute to the GTP site. Residue glutamate 71 participates in Mg(2+) binding. Residue glutamate 254 is part of the active site. Tyrosine 282 carries the 3'-nitrotyrosine modification. Serine 439 is modified (phosphoserine). Position 450 is a 3'-nitrotyrosine (tyrosine 450).

This sequence belongs to the tubulin family. Dimer of alpha and beta chains. A typical microtubule is a hollow water-filled tube with an outer diameter of 25 nm and an inner diameter of 15 nM. Alpha-beta heterodimers associate head-to-tail to form protofilaments running lengthwise along the microtubule wall with the beta-tubulin subunit facing the microtubule plus end conferring a structural polarity. Microtubules usually have 13 protofilaments but different protofilament numbers can be found in some organisms and specialized cells. The cofactor is Mg(2+). Some glutamate residues at the C-terminus are polyglutamylated, resulting in polyglutamate chains on the gamma-carboxyl group. Polyglutamylation plays a key role in microtubule severing by spastin (SPAST). SPAST preferentially recognizes and acts on microtubules decorated with short polyglutamate tails: severing activity by SPAST increases as the number of glutamates per tubulin rises from one to eight, but decreases beyond this glutamylation threshold. Glutamylation is also involved in cilia motility. Post-translationally, some glutamate residues at the C-terminus are monoglycylated but not polyglycylated due to the absence of functional TTLL10 in human. Monoglycylation is mainly limited to tubulin incorporated into cilia and flagella axonemes, which is required for their stability and maintenance. Flagella glycylation controls sperm motility. Both polyglutamylation and monoglycylation can coexist on the same protein on adjacent residues, and lowering glycylation levels increases polyglutamylation, and reciprocally. In terms of processing, acetylation of alpha chains at Lys-40 is located inside the microtubule lumen. This modification has been correlated with increased microtubule stability, intracellular transport and ciliary assembly. Methylation of alpha chains at Lys-40 is found in mitotic microtubules and is required for normal mitosis and cytokinesis contributing to genomic stability. Post-translationally, nitration of Tyr-450 is irreversible and interferes with normal dynein intracellular distribution. In terms of processing, undergoes a tyrosination/detyrosination cycle, the cyclic removal and re-addition of a C-terminal tyrosine residue by the enzymes tubulin tyrosine carboxypeptidase (MATCAP1/KIAA0895L, VASH1 or VASH2) and tubulin tyrosine ligase (TTL), respectively. Tyrosination promotes microtubule interaction with CAP-Gly domain-containing proteins such as CLIP1, CLIP2 and DCTN1. Tyrosination regulates the initiation of dynein-dynactin motility via interaction with DCTN1, which brings the dynein-dynactin complex into contact with microtubules. In neurons, tyrosinated tubulins mediate the initiation of retrograde vesicle transport. Post-translationally, detyrosination is involved in metaphase plate congression by guiding chromosomes during mitosis: detyrosination promotes interaction with CENPE, promoting pole-proximal transport of chromosomes toward the equator. Detyrosination increases microtubules-dependent mechanotransduction in dystrophic cardiac and skeletal muscle. In cardiomyocytes, detyrosinated microtubules are required to resist to contractile compression during contraction: detyrosination promotes association with desmin (DES) at force-generating sarcomeres, leading to buckled microtubules and mechanical resistance to contraction.

It localises to the cytoplasm. The protein localises to the cytoskeleton. The catalysed reaction is GTP + H2O = GDP + phosphate + H(+). In terms of biological role, tubulin is the major constituent of microtubules, a cylinder consisting of laterally associated linear protofilaments composed of alpha- and beta-tubulin heterodimers. Microtubules grow by the addition of GTP-tubulin dimers to the microtubule end, where a stabilizing cap forms. Below the cap, tubulin dimers are in GDP-bound state, owing to GTPase activity of alpha-tubulin. This chain is Tubulin alpha-3E chain (TUBA3E), found in Homo sapiens (Human).